We begin with the raw amino-acid sequence, 430 residues long: MTEFSPREIVSELDRYIVGHAEAKKAVAVALRNRWRRRRVPADLRDEVTPKNILLIGPTGVGKTEIARRLAKLAQAPFLKVEATKFTEVGYVGRDVDQIVRDLVESALAMVREKRRAAVKAKAEGGAEERILDALTGPGSTAARESFRKKLRAGELDDKEVELQLADTGGPSFDIPGQPGAAVFNLSDMMKSLGGGRTKTHKTTVSGAWAPLIAEESDKLLDQEALTQEALELAENHGIVFLDEIDKVASSSQRSGADVSREGVQRDLLPLIEGTTVSTKYGPVKTDHILFIASGAFHVAKPSDLLPELQGRLPIRVELKGLSRDDMRRILTEPEANLIRQHQALMATEEVTLVFTDEAIDALADAAVAVNGSVENIGARRLQTVMEKVVEEISFTAADRGGETVTIDAAYVQERVGALAANADLSRFIL.

Residues valine 18, 60-65 (GVGKTE), aspartate 243, glutamate 308, and arginine 380 contribute to the ATP site.

The protein belongs to the ClpX chaperone family. HslU subfamily. In terms of assembly, a double ring-shaped homohexamer of HslV is capped on each side by a ring-shaped HslU homohexamer. The assembly of the HslU/HslV complex is dependent on binding of ATP.

The protein localises to the cytoplasm. Functionally, ATPase subunit of a proteasome-like degradation complex; this subunit has chaperone activity. The binding of ATP and its subsequent hydrolysis by HslU are essential for unfolding of protein substrates subsequently hydrolyzed by HslV. HslU recognizes the N-terminal part of its protein substrates and unfolds these before they are guided to HslV for hydrolysis. This Caulobacter vibrioides (strain ATCC 19089 / CIP 103742 / CB 15) (Caulobacter crescentus) protein is ATP-dependent protease ATPase subunit HslU.